The chain runs to 393 residues: Acetylornithine aminotransferase 1 (393 aa).

Arg131 is a binding site for N(2)-acetyl-L-ornithine. 215–218 (DEVQ) is a pyridoxal 5'-phosphate binding site. Residue Lys244 is modified to N6-(pyridoxal phosphate)lysine. Residue Thr272 coordinates N(2)-acetyl-L-ornithine. Thr273 lines the pyridoxal 5'-phosphate pocket.

The protein belongs to the class-III pyridoxal-phosphate-dependent aminotransferase family. ArgD subfamily. As to quaternary structure, homodimer. The cofactor is pyridoxal 5'-phosphate.

Its subcellular location is the cytoplasm. The enzyme catalyses N(2)-acetyl-L-ornithine + 2-oxoglutarate = N-acetyl-L-glutamate 5-semialdehyde + L-glutamate. Its pathway is amino-acid biosynthesis; L-arginine biosynthesis; N(2)-acetyl-L-ornithine from L-glutamate: step 4/4. The sequence is that of Acetylornithine aminotransferase 1 from Bordetella pertussis (strain Tohama I / ATCC BAA-589 / NCTC 13251).